The sequence spans 271 residues: MLLAIDVRNTHTVVGLISGSGDHAKVEQHWRIRTEPEVTADELALTIDGLIGDDAERLTGAAGLSTVPSVLHEVRVMLDQYWPSVPHVLIEPGVRTGIPLLVDNPKEVGADRIVNCLAAYHKFGTASIVVDFGSSICVDVVSAKGEFLGGAIAPGVQVSSDAAAERSAALRRVELTRPRSVVGKNTVECMQAGAVFGFAGLVDGLVSRVRDDVDGFGGGDVNVVATGHGAPLVLADLRTVEHYDRHLTLDGLRLVFERNRDSQRGKLKQAR.

Position 6 to 13 (6 to 13 (DVRNTHTV)) interacts with ATP. 109–112 (GADR) is a substrate binding site. Residue D111 is the Proton acceptor of the active site. D131 serves as a coordination point for K(+). S134 provides a ligand contact to ATP. T186 serves as a coordination point for substrate.

The protein belongs to the type III pantothenate kinase family. In terms of assembly, homodimer. NH4(+) serves as cofactor. Requires K(+) as cofactor.

The protein resides in the cytoplasm. It catalyses the reaction (R)-pantothenate + ATP = (R)-4'-phosphopantothenate + ADP + H(+). The protein operates within cofactor biosynthesis; coenzyme A biosynthesis; CoA from (R)-pantothenate: step 1/5. Functionally, catalyzes the phosphorylation of pantothenate (Pan), the first step in CoA biosynthesis. This chain is Type III pantothenate kinase, found in Mycolicibacterium vanbaalenii (strain DSM 7251 / JCM 13017 / BCRC 16820 / KCTC 9966 / NRRL B-24157 / PYR-1) (Mycobacterium vanbaalenii).